Reading from the N-terminus, the 638-residue chain is MTHMPETPLLDQVHYPSDLRKLEDRDLPQLAREVRDEMIDAVSRTGGHLGAGLGVVELTIAIHNVFDTPNDRLIFDVGHQCYPHKILTGRRDRIRTLRQEGGISGFTRRAESEYDPFGAAHSSTSISAGLGMAVAADLDKTDRRVIAVIGDGAMSAGMAYEALNNAGALDARLIVILNDNDMSIAPPTGAMSAYLARLASGRTYMGFRDLGKKLTAYLGKNVDRAITRAVEHARGYVTGGTMFEEMGFYHIGPIDGHSFDHLLPVLRNVRDNAQGPVLIHVVTQKGKGYAPAEAAADKYHGVNKFDVITGAQAKVKPNAPSYTSVFADALVQEATFDDKIVGITAAMPSGTGLDKLQEVFPKRCFDVGIAEQHAVTFAAGLAAEGFKPFAALYSTFLQRAYDQVVHDVAIQGLPVRFPIDRAGFVGADGPTHAGSFDTTFLATLPGFVVMAAADEAELKHMVRTAAAYDLGPISFRYPRGEGVGIEMPERGQILEIGKGRIVKQGSKVALLSFGTRLADSLAAAEDLDAAGLPTTVADARFAKPLDHDLIRQLASHHEVLITIEEGSVGGFGSQVMQFLASEGLLDNGLKIRTLVMPDIWVEQAKPEVMNAMAGLDRAGIVQTVFKALGRSLIVGAAG.

Thiamine diphosphate contacts are provided by residues histidine 79 and 120-122 (AHS). Aspartate 151 contacts Mg(2+). Residues 152–153 (GA), asparagine 180, tyrosine 289, and glutamate 371 each bind thiamine diphosphate. Asparagine 180 contacts Mg(2+).

This sequence belongs to the transketolase family. DXPS subfamily. Homodimer. Mg(2+) is required as a cofactor. Requires thiamine diphosphate as cofactor.

The catalysed reaction is D-glyceraldehyde 3-phosphate + pyruvate + H(+) = 1-deoxy-D-xylulose 5-phosphate + CO2. Its pathway is metabolic intermediate biosynthesis; 1-deoxy-D-xylulose 5-phosphate biosynthesis; 1-deoxy-D-xylulose 5-phosphate from D-glyceraldehyde 3-phosphate and pyruvate: step 1/1. In terms of biological role, catalyzes the acyloin condensation reaction between C atoms 2 and 3 of pyruvate and glyceraldehyde 3-phosphate to yield 1-deoxy-D-xylulose-5-phosphate (DXP). The protein is 1-deoxy-D-xylulose-5-phosphate synthase of Rhizobium rhizogenes (strain K84 / ATCC BAA-868) (Agrobacterium radiobacter).